Consider the following 144-residue polypeptide: MTMSPCPLLLVFVLGLVVIPPTLAQNERYEKFLRQHYDAKPNGRDDRYCESMMKERKLTSPCKDVNTFIHGTKKNIRAICGKKGSPYGENFRISNSPFQITTCTHSGASPRPPCGYRAFKDFRYIVIACEDGWPVHFDESFISP.

The N-terminal stretch at 1–24 (MTMSPCPLLLVFVLGLVVIPPTLA) is a signal peptide. The active-site Proton acceptor is the histidine 36. Disulfide bonds link cysteine 49/cysteine 103, cysteine 62/cysteine 114, and cysteine 80/cysteine 129. The short motif at 54–58 (KERKL) is the Nucleolar localization signal element. Histidine 136 acts as the Proton donor in catalysis.

The protein belongs to the pancreatic ribonuclease family. In terms of tissue distribution, detected in small intestine, caecum and colon, with the highest expression in Paneth cells in the intestinal epithelium.

The protein resides in the secreted. It is found in the cytoplasmic vesicle. Its subcellular location is the secretory vesicle lumen. It localises to the nucleus. The protein localises to the nucleolus. Its function is as follows. Has bactericidal activity against E.faecalis and L.monocytogenes, but not against L.innocua and E.coli. Promotes angiogenesis (in vitro). Has low ribonuclease activity (in vitro). Promotes proliferation of melanoma cells, but not of endothelial cells or fibroblasts (in vitro). In Mus musculus (Mouse), this protein is Angiogenin-4 (Ang4).